A 56-amino-acid chain; its full sequence is UPF0434 protein Sden_2197 (56 aa).

The protein belongs to the UPF0434 family.

The chain is UPF0434 protein Sden_2197 from Shewanella denitrificans (strain OS217 / ATCC BAA-1090 / DSM 15013).